Consider the following 503-residue polypeptide: Maturase K (503 aa).

Belongs to the intron maturase 2 family. MatK subfamily.

Its subcellular location is the plastid. The protein resides in the chloroplast. In terms of biological role, usually encoded in the trnK tRNA gene intron. Probably assists in splicing its own and other chloroplast group II introns. In Eucalyptus globulus (Tasmanian blue gum), this protein is Maturase K.